A 248-amino-acid polypeptide reads, in one-letter code: tRNA uridine(34) hydroxylase (248 aa).

Positions 124-218 constitute a Rhodanese domain; it reads TKQDVIVVDT…YLEDTQNKNN (95 aa). Cys178 functions as the Cysteine persulfide intermediate in the catalytic mechanism.

It belongs to the TrhO family.

The catalysed reaction is uridine(34) in tRNA + AH2 + O2 = 5-hydroxyuridine(34) in tRNA + A + H2O. Functionally, catalyzes oxygen-dependent 5-hydroxyuridine (ho5U) modification at position 34 in tRNAs. This chain is tRNA uridine(34) hydroxylase, found in Rickettsia bellii (strain OSU 85-389).